The chain runs to 443 residues: MSEMTPREIVSELDKHIIGQDNAKRSVAIALRNRWRRMQLNEELRHEVTPKNILMIGPTGVGKTEIARRLAKLANAPFIKVEATKFTEVGYVGKEVDSIIRDLTDAAVKMVRVQAIEKNRYRAEELAEERILDVLIPPAKNNWGQTEQQQEPSAARQAFRKKLREGQLDDKEIEIDLAAAPMGVEIMAPPGMEEMTSQLQSMFQNLGGQKQKARKLKIKDAMKLLIEEEAAKLVNPEELKQDAIDAVEQHGIVFIDEIDKICKRGESSGPDVSREGVQRDLLPLVEGCTVSTKHGMVKTDHILFIASGAFQIAKPSDLIPELQGRLPIRVELQALTTSDFERILTEPNASITVQYKALMATEGVNIEFTESGIKRIAEAAWQVNESTENIGARRLHTVLERLMEEISYDASDLSGQSITIDADYVSKHLDALVADEDLSRFIL.

Residues I18, 60–65 (GVGKTE), D256, E321, and R393 contribute to the ATP site.

Belongs to the ClpX chaperone family. HslU subfamily. A double ring-shaped homohexamer of HslV is capped on each side by a ring-shaped HslU homohexamer. The assembly of the HslU/HslV complex is dependent on binding of ATP.

It localises to the cytoplasm. Its function is as follows. ATPase subunit of a proteasome-like degradation complex; this subunit has chaperone activity. The binding of ATP and its subsequent hydrolysis by HslU are essential for unfolding of protein substrates subsequently hydrolyzed by HslV. HslU recognizes the N-terminal part of its protein substrates and unfolds these before they are guided to HslV for hydrolysis. This chain is ATP-dependent protease ATPase subunit HslU, found in Escherichia fergusonii (strain ATCC 35469 / DSM 13698 / CCUG 18766 / IAM 14443 / JCM 21226 / LMG 7866 / NBRC 102419 / NCTC 12128 / CDC 0568-73).